A 338-amino-acid polypeptide reads, in one-letter code: Heat-inducible transcription repressor HrcA (338 aa).

The protein belongs to the HrcA family.

Negative regulator of class I heat shock genes (grpE-dnaK-dnaJ and groELS operons). Prevents heat-shock induction of these operons. The sequence is that of Heat-inducible transcription repressor HrcA from Thermotoga maritima (strain ATCC 43589 / DSM 3109 / JCM 10099 / NBRC 100826 / MSB8).